The sequence spans 155 residues: Ribonuclease H (155 aa).

Residues 1-146 (MNALFAWTDG…ADELARAGMA (146 aa)) enclose the RNase H type-1 domain. Residues D9, E52, D74, and D138 each contribute to the Mg(2+) site.

Belongs to the RNase H family. Monomer. Mg(2+) is required as a cofactor.

The protein localises to the cytoplasm. It catalyses the reaction Endonucleolytic cleavage to 5'-phosphomonoester.. Its function is as follows. Endonuclease that specifically degrades the RNA of RNA-DNA hybrids. The protein is Ribonuclease H of Paracoccus denitrificans (strain Pd 1222).